The primary structure comprises 506 residues: Cytochrome P450 monooxygenase TES1 (506 aa).

A helical transmembrane segment spans residues 26–46 (MSVVLAGLILLASIYFPRFMF). Residues Asn167, Asn201, Asn298, and Asn427 are each glycosylated (N-linked (GlcNAc...) asparagine). Cys440 serves as a coordination point for heme.

The protein belongs to the cytochrome P450 family. Heme is required as a cofactor.

It is found in the membrane. The protein operates within phytotoxin biosynthesis. In terms of biological role, cytochrome P450 monooxygenase; part of the gene cluster that mediates the biosynthesis of the phytotoxin tentoxin, an inhibitor the F1-ATPase activity of chloroplasts, resulting in chlorosis in sensitive plants. Tentoxin is a cyclic tetrapeptide that consists of four amino acid residues: glycine (Gly), alanine (Ala), leucine (Leu), and dehydrophenylalanine (DPhe). In addition, both the Ala and DPhe residues are N-methylated. The nonribosomal peptide synthetase TES assembles tentoxin from the four substrate amino acids. The adenylation domains of each of the 4 modules are responsible for the activation of Gly, Ala, Leu and DPhe, respectively. In addition, the N-methyltransferase domains in the second and fourth modules of TES could be responsible for N-methylation of Ala and DPhe residues. Finally, the condensation domain located in the termination module probably catalyzes the formation of the intramolecular macrocyclization and then the release of tentoxin. The cytochrome P450 monooxygenase TES1 is predicted to be involved in the formation of DPhe. The polypeptide is Cytochrome P450 monooxygenase TES1 (Alternaria alternata (Alternaria rot fungus)).